A 121-amino-acid polypeptide reads, in one-letter code: Large ribosomal subunit protein uL18 (121 aa).

It belongs to the universal ribosomal protein uL18 family. Part of the 50S ribosomal subunit; part of the 5S rRNA/L5/L18/L25 subcomplex. Contacts the 5S and 23S rRNAs.

Its function is as follows. This is one of the proteins that bind and probably mediate the attachment of the 5S RNA into the large ribosomal subunit, where it forms part of the central protuberance. The sequence is that of Large ribosomal subunit protein uL18 from Methylibium petroleiphilum (strain ATCC BAA-1232 / LMG 22953 / PM1).